The primary structure comprises 316 residues: Lipoyl synthase (316 aa).

Residues Cys-60, Cys-65, Cys-71, Cys-86, Cys-90, Cys-93, and Ser-297 each contribute to the [4Fe-4S] cluster site. The Radical SAM core domain occupies 72-286; it reads WEDREATFLI…KDEADEVGFT (215 aa).

The protein belongs to the radical SAM superfamily. Lipoyl synthase family. [4Fe-4S] cluster is required as a cofactor.

The protein localises to the cytoplasm. It carries out the reaction [[Fe-S] cluster scaffold protein carrying a second [4Fe-4S](2+) cluster] + N(6)-octanoyl-L-lysyl-[protein] + 2 oxidized [2Fe-2S]-[ferredoxin] + 2 S-adenosyl-L-methionine + 4 H(+) = [[Fe-S] cluster scaffold protein] + N(6)-[(R)-dihydrolipoyl]-L-lysyl-[protein] + 4 Fe(3+) + 2 hydrogen sulfide + 2 5'-deoxyadenosine + 2 L-methionine + 2 reduced [2Fe-2S]-[ferredoxin]. It functions in the pathway protein modification; protein lipoylation via endogenous pathway; protein N(6)-(lipoyl)lysine from octanoyl-[acyl-carrier-protein]: step 2/2. Its function is as follows. Catalyzes the radical-mediated insertion of two sulfur atoms into the C-6 and C-8 positions of the octanoyl moiety bound to the lipoyl domains of lipoate-dependent enzymes, thereby converting the octanoylated domains into lipoylated derivatives. The polypeptide is Lipoyl synthase (Nocardioides sp. (strain ATCC BAA-499 / JS614)).